Consider the following 276-residue polypeptide: Probable transposase for insertion sequence element IS702 (276 aa).

In terms of domain architecture, DDE Tnp4 spans 118-256; the sequence is MDVTESPIER…SNQYRNRHRR (139 aa). A divalent metal cation-binding residues include D119, D170, D190, and E234.

The protein belongs to the transposase 11 family. The cofactor is a divalent metal cation.

Involved in the transposition of the insertion sequence. The chain is Probable transposase for insertion sequence element IS702 from Microchaete diplosiphon (Fremyella diplosiphon).